A 360-amino-acid chain; its full sequence is Peptide chain release factor 1 (360 aa).

At glutamine 237 the chain carries N5-methylglutamine.

This sequence belongs to the prokaryotic/mitochondrial release factor family. Post-translationally, methylated by PrmC. Methylation increases the termination efficiency of RF1.

The protein resides in the cytoplasm. In terms of biological role, peptide chain release factor 1 directs the termination of translation in response to the peptide chain termination codons UAG and UAA. In Pseudomonas savastanoi pv. phaseolicola (strain 1448A / Race 6) (Pseudomonas syringae pv. phaseolicola (strain 1448A / Race 6)), this protein is Peptide chain release factor 1.